The following is a 180-amino-acid chain: ATP-dependent protease subunit HslV (180 aa).

Thr8 is a catalytic residue. Na(+) is bound by residues Ser165, Cys168, and Thr171.

Belongs to the peptidase T1B family. HslV subfamily. In terms of assembly, a double ring-shaped homohexamer of HslV is capped on each side by a ring-shaped HslU homohexamer. The assembly of the HslU/HslV complex is dependent on binding of ATP.

It localises to the cytoplasm. The enzyme catalyses ATP-dependent cleavage of peptide bonds with broad specificity.. Allosterically activated by HslU binding. Its function is as follows. Protease subunit of a proteasome-like degradation complex believed to be a general protein degrading machinery. The sequence is that of ATP-dependent protease subunit HslV from Staphylococcus saprophyticus subsp. saprophyticus (strain ATCC 15305 / DSM 20229 / NCIMB 8711 / NCTC 7292 / S-41).